Consider the following 88-residue polypeptide: MLHHIPLFLSSTASPFFIRLIRFLTYSVIFTRSSSSICIVVLMPLLMYIRCPLSAPASAIYTFNCHLLSACQSRLKFVLISTMRPHHI.

This is an uncharacterized protein from Thermoproteus tenax virus 1 (strain KRA1) (TTV1).